The primary structure comprises 518 residues: Myosin-binding protein 7 (518 aa).

Positions 69–167 (NELELLRETV…ALTFEAQAYK (99 aa)) constitute a GTD-binding domain. Residues 276–350 (VVGQSPRHQR…DSSEIGDNDM (75 aa)) form a disordered region. Residues 291 to 301 (STGSASSLLGT) are compositionally biased toward low complexity. A compositionally biased stretch (polar residues) spans 310-320 (SNDSPRSNNGS). Serine 385 carries the post-translational modification Phosphoserine. Residues 399–431 (EISKLYMRLQALEADRESMRQAIMSMRTEKAQM) are a coiled coil. Residues 458–477 (IIGAFNFISVFKWITSFVFW) traverse the membrane as a helical segment.

Interacts with myosin XI-I.

The protein localises to the endomembrane system. Membrane-anchored myosin receptors that define a distinct, plant-specific transport vesicle compartment. In Arabidopsis thaliana (Mouse-ear cress), this protein is Myosin-binding protein 7.